We begin with the raw amino-acid sequence, 309 residues long: Homoserine kinase (309 aa).

91 to 101 (PIGSGLGSSAC) contacts ATP.

It belongs to the GHMP kinase family. Homoserine kinase subfamily.

Its subcellular location is the cytoplasm. It catalyses the reaction L-homoserine + ATP = O-phospho-L-homoserine + ADP + H(+). The protein operates within amino-acid biosynthesis; L-threonine biosynthesis; L-threonine from L-aspartate: step 4/5. Catalyzes the ATP-dependent phosphorylation of L-homoserine to L-homoserine phosphate. This Salmonella agona (strain SL483) protein is Homoserine kinase.